Consider the following 113-residue polypeptide: MTDTHSIAQPFEAEVSPANNRQLTVSYASRYPDYSRIPAITLKGQWLEAAGFATGTAVVVKVMEGCIVLTAQPAAAEESELMQSLRQVCKLSARKQKQVQDFIGVITGKQKVA.

Residues 29–74 enclose the SpoVT-AbrB domain; it reads SRYPDYSRIPAITLKGQWLEAAGFATGTAVVVKVMEGCIVLTAQPA.

The protein belongs to the SymE family.

The protein resides in the cytoplasm. Functionally, involved in the degradation and recycling of damaged RNA. It is itself a target for degradation by the ATP-dependent protease Lon. This Escherichia coli (strain ATCC 8739 / DSM 1576 / NBRC 3972 / NCIMB 8545 / WDCM 00012 / Crooks) protein is Endoribonuclease SymE.